A 378-amino-acid chain; its full sequence is Alanine racemase (378 aa).

The active-site Proton acceptor; specific for D-alanine is the Lys-40. Lys-40 is subject to N6-(pyridoxal phosphate)lysine. Arg-140 is a substrate binding site. Tyr-270 (proton acceptor; specific for L-alanine) is an active-site residue. Met-317 contributes to the substrate binding site.

The protein belongs to the alanine racemase family. The cofactor is pyridoxal 5'-phosphate.

The enzyme catalyses L-alanine = D-alanine. The protein operates within amino-acid biosynthesis; D-alanine biosynthesis; D-alanine from L-alanine: step 1/1. Functionally, catalyzes the interconversion of L-alanine and D-alanine. May also act on other amino acids. This chain is Alanine racemase (alr), found in Lacticaseibacillus paracasei (strain ATCC 334 / BCRC 17002 / CCUG 31169 / CIP 107868 / KCTC 3260 / NRRL B-441) (Lactobacillus paracasei).